The primary structure comprises 494 residues: E3 ubiquitin-protein ligase ari-1.1 (494 aa).

Residues 1–30 (MSSDDEINMDDSDSSQGEIDDGCMSDDDGI) are compositionally biased toward acidic residues. The segment at 1 to 52 (MSSDDEINMDDSDSSQGEIDDGCMSDDDGIVLESREQNSSDYKDNGEPDNEV) is disordered. A compositionally biased stretch (basic and acidic residues) spans 33–52 (ESREQNSSDYKDNGEPDNEV). The TRIAD supradomain stretch occupies residues 124 to 331 (GDAECDICCS…SSWYSCNRFD (208 aa)). Zn(2+) is bound by residues cysteine 128, cysteine 131, cysteine 142, histidine 144, cysteine 147, cysteine 150, cysteine 169, cysteine 174, cysteine 214, cysteine 219, cysteine 235, cysteine 237, cysteine 242, cysteine 245, histidine 250, cysteine 255, cysteine 282, and cysteine 285. The RING-type 1 zinc-finger motif lies at 128 to 174 (CDICCSLGELSGLSCNHRACTQCWKAYLTNKIANNAQSEIECMAPNC). Residues 194–255 (ATYRKLIVAS…GHDWHEPVNC (62 aa)) form an IBR-type zinc finger. The RING-type 2; atypical zinc finger occupies 282–313 (CPKCMITIEKDGGCNHMTCKNTACRFEFCWMC). Cysteine 295 is a catalytic residue. Cysteine 300, cysteine 305, cysteine 310, cysteine 313, histidine 320, and cysteine 327 together coordinate Zn(2+). Residues 346–494 (RANLQRYLFY…ADQELWVFNE (149 aa)) form an ariadne domain region.

This sequence belongs to the RBR family. Ariadne subfamily. In terms of assembly, interacts with ubiquitin-conjugating enzyme E2 ubc-18.

The protein resides in the nucleus. The protein localises to the cytoplasm. It catalyses the reaction [E2 ubiquitin-conjugating enzyme]-S-ubiquitinyl-L-cysteine + [acceptor protein]-L-lysine = [E2 ubiquitin-conjugating enzyme]-L-cysteine + [acceptor protein]-N(6)-ubiquitinyl-L-lysine.. Autoinhibited by the ariadne domain, which masks the second RING-type zinc finger that contains the active site and inhibits the E3 activity. Functionally, E3 ubiquitin-protein transferase, which catalyzes ubiquitination of target proteins together with ubiquitin-conjugating enzyme E2 ubc-18. Acts with ubc-18 to regulate pharyngeal development. This chain is E3 ubiquitin-protein ligase ari-1.1, found in Caenorhabditis elegans.